The primary structure comprises 89 residues: Small ribosomal subunit protein uS14A (89 aa).

It belongs to the universal ribosomal protein uS14 family. In terms of assembly, part of the 30S ribosomal subunit. Contacts proteins S3 and S10.

Functionally, binds 16S rRNA, required for the assembly of 30S particles and may also be responsible for determining the conformation of the 16S rRNA at the A site. In Listeria innocua serovar 6a (strain ATCC BAA-680 / CLIP 11262), this protein is Small ribosomal subunit protein uS14A.